The chain runs to 226 residues: ATP synthase subunit a (226 aa).

Transmembrane regions (helical) follow at residues 17 to 37 (FSYFFHIGLVALIAVIVAMMA), 79 to 99 (LVATLGIIVFFSNIIGILPGF), 105 to 125 (SLNLTLSLAIIVFVYYHFEGI), 134 to 154 (FAHFMGPIKLLAPLMFPIEIV), 176 to 196 (LFLMVILALVPYIAPLPAYVL), and 199 to 219 (FMAFLQAFIFMILTYVYLAGA).

The protein belongs to the ATPase A chain family. In terms of assembly, F-type ATPases have 2 components, CF(1) - the catalytic core - and CF(0) - the membrane proton channel. CF(1) has five subunits: alpha(3), beta(3), gamma(1), delta(1), epsilon(1). CF(0) has three main subunits: a(1), b(2) and c(9-12). The alpha and beta chains form an alternating ring which encloses part of the gamma chain. CF(1) is attached to CF(0) by a central stalk formed by the gamma and epsilon chains, while a peripheral stalk is formed by the delta and b chains.

The protein resides in the cell inner membrane. Functionally, key component of the proton channel; it plays a direct role in the translocation of protons across the membrane. This Campylobacter jejuni subsp. doylei (strain ATCC BAA-1458 / RM4099 / 269.97) protein is ATP synthase subunit a.